Here is a 152-residue protein sequence, read N- to C-terminus: Nucleoside diphosphate kinase (152 aa).

Residues K11, F59, R87, T93, R104, and N114 each contribute to the ATP site. Catalysis depends on H117, which acts as the Pros-phosphohistidine intermediate.

This sequence belongs to the NDK family. Homotetramer. Mg(2+) is required as a cofactor.

The protein resides in the cytoplasm. The catalysed reaction is dZDP + ATP = dZTP + ADP. It carries out the reaction a 2'-deoxyribonucleoside 5'-diphosphate + ATP = a 2'-deoxyribonucleoside 5'-triphosphate + ADP. The enzyme catalyses a ribonucleoside 5'-diphosphate + ATP = a ribonucleoside 5'-triphosphate + ADP. It functions in the pathway purine metabolism. In terms of biological role, major role in the synthesis of nucleoside triphosphates other than ATP. The ATP gamma phosphate is transferred to the NDP beta phosphate via a ping-pong mechanism, using a phosphorylated active-site intermediate. Its function is as follows. (Microbial infection) Catalyzes the phosphorylation of dZDP to dZTP, when the bacterium is infected by a phage that produces the substrate for the synthesis of dZTP (2- amino-2'-deoxyadenosine 5'-triphosphate), which is then used by the phage as a DNA polymerase substrate. This Synechococcus sp. (strain CC9311) protein is Nucleoside diphosphate kinase.